A 1819-amino-acid polypeptide reads, in one-letter code: Non-reducing polyketide synthase 8 (1819 aa).

The 228-residue stretch at 38–265 folds into the Starter acyltransferase (SAT) domain; the sequence is QLTLLSKQKQ…QKIINLPVYG (228 aa). The Ketosynthase family 3 (KS3) domain occupies 405 to 840; that stretch reads KSSIAIVGMS…GGNTMIAIEE (436 aa). Active-site for beta-ketoacyl synthase activity residues include Cys-578, His-714, and His-758. The Malonyl-CoA:ACP transacylase (MAT) domain occupies 943–1262; sequence FAFTGQGASY…SLSTLHCAGA (320 aa). The tract at residues 1336-1476 is N-terminal hotdog fold; that stretch reads QRIIEESFDG…GDRSAWLSSW (141 aa). Residues 1336–1646 enclose the PKS/mFAS DH domain; that stretch reads QRIIEESFDG…FRQYPRILLN (311 aa). His-1368 functions as the Proton acceptor; for dehydratase activity in the catalytic mechanism. Residues 1404–1642 form a dehydratase (DH) domain region; that stretch reads AMNVADLEVV…GGIKFRQYPR (239 aa). The tract at residues 1498–1646 is C-terminal hotdog fold; the sequence is IANRLSHNMA…FRQYPRILLN (149 aa). The active-site Proton donor; for dehydratase activity is the Asp-1557. The region spanning 1741–1818 is the Carrier domain; the sequence is VDTNSVASKA…DLRSWLMEYY (78 aa). O-(pantetheine 4'-phosphoryl)serine is present on Ser-1778.

The cofactor is pantetheine 4'-phosphate.

It functions in the pathway secondary metabolite biosynthesis. Functionally, non-reducing polyketide synthase; part of the gene cluster that mediates the biosynthesis of dibenzodioxocinones such as pestalotiollide B, a novel class of inhibitors against cholesterol ester transfer protein (CEPT). The biosynthesis initiates from condensation of acetate and malonate units catalyzed by the non-reducing PKS pks8/GME11356. Pks8/GME11356 lacks a thioesterase (TE) domain, which is important to the cyclizing of the third ring of atrochrysone carboxylic acid, and the esterase GME11355 might play the role of TE and catalyzes the cyclization reaction of the C ring. The lactamase-like protein GME11357 (or other beta-lactamases in Pestalotiopsis microspora) probably hydrolyzes the thioester bond between the ACP of pks8/GME11356 and the intermediate to release atrochrysone carboxylic acid, which is spontaneously dehydrates to form endocrocin anthrone. Endocrocin anthrone is further converted to emodin via the endocrocin intermediate. Emodin is then oxidized by several enzymes such as the Baeyer-Villiger oxidase GME11358, the oxidoreductase GME11367, the short chain dehydrogenase/reductase GME11373, as well as by other oxidoreductases from the cluster, to modify the A and C rings and open the B ring, and finally yield monodictyphenone. The prenyltransferase GME11375 may catalyze the addition reaction between the C5 side chains and the carbon bone of dibenzodioxocinones. The remaining biochemical reactions to the final product dibenzodioxocinones should be methylation catalyzed by methyltransferase GME11366 and reduction and lactonization reaction catalyzed by a series of oxidordeuctases. The polypeptide is Non-reducing polyketide synthase 8 (Pestalotiopsis microspora).